We begin with the raw amino-acid sequence, 161 residues long: Pathogenesis-related protein 1 (161 aa).

The first 26 residues, 1-26, serve as a signal peptide directing secretion; it reads MNFTGYSRFLIVFVALVGALVLPSKA. Residues 34–149 enclose the SCP domain; the sequence is LRVHNQARGA…NGGTIISCNY (116 aa). Disulfide bonds link C70–C138, C113–C117, and C133–C147.

Belongs to the CRISP family.

It localises to the secreted. Its subcellular location is the extracellular space. It is found in the apoplast. Functionally, partially responsible for acquired pathogen resistance. This is Pathogenesis-related protein 1 from Arabidopsis thaliana (Mouse-ear cress).